Here is a 719-residue protein sequence, read N- to C-terminus: Phosphoribosylformylglycinamidine synthase subunit PurL (719 aa).

Histidine 47 is an active-site residue. Positions 50 and 89 each coordinate ATP. Glutamate 91 contributes to the Mg(2+) binding site. Residues 92-95 (SHNH) and arginine 114 each bind substrate. The active-site Proton acceptor is histidine 93. Mg(2+) is bound at residue aspartate 115. Glutamine 238 serves as a coordination point for substrate. Aspartate 266 contributes to the Mg(2+) binding site. 310-312 (ESQ) serves as a coordination point for substrate. Aspartate 488 and glycine 525 together coordinate ATP. Asparagine 526 is a binding site for Mg(2+). Position 528 (serine 528) interacts with substrate.

The protein belongs to the FGAMS family. Monomer. Part of the FGAM synthase complex composed of 1 PurL, 1 PurQ and 2 PurS subunits.

It localises to the cytoplasm. It carries out the reaction N(2)-formyl-N(1)-(5-phospho-beta-D-ribosyl)glycinamide + L-glutamine + ATP + H2O = 2-formamido-N(1)-(5-O-phospho-beta-D-ribosyl)acetamidine + L-glutamate + ADP + phosphate + H(+). The protein operates within purine metabolism; IMP biosynthesis via de novo pathway; 5-amino-1-(5-phospho-D-ribosyl)imidazole from N(2)-formyl-N(1)-(5-phospho-D-ribosyl)glycinamide: step 1/2. Its function is as follows. Part of the phosphoribosylformylglycinamidine synthase complex involved in the purines biosynthetic pathway. Catalyzes the ATP-dependent conversion of formylglycinamide ribonucleotide (FGAR) and glutamine to yield formylglycinamidine ribonucleotide (FGAM) and glutamate. The FGAM synthase complex is composed of three subunits. PurQ produces an ammonia molecule by converting glutamine to glutamate. PurL transfers the ammonia molecule to FGAR to form FGAM in an ATP-dependent manner. PurS interacts with PurQ and PurL and is thought to assist in the transfer of the ammonia molecule from PurQ to PurL. This chain is Phosphoribosylformylglycinamidine synthase subunit PurL, found in Jannaschia sp. (strain CCS1).